A 382-amino-acid chain; its full sequence is Rubredoxin-NAD(+) reductase (382 aa).

Residues 9–12 (TGLA), 33–34 (TA), Lys-42, Val-80, Glu-156, Asp-275, Val-287, and Lys-318 each bind FAD.

It belongs to the FAD-dependent oxidoreductase family. In terms of assembly, homodimer. FAD is required as a cofactor.

The protein localises to the cytoplasm. It carries out the reaction 2 reduced [rubredoxin] + NAD(+) + H(+) = 2 oxidized [rubredoxin] + NADH. The protein operates within hydrocarbon metabolism; alkane degradation. Involved in the hydrocarbon hydroxylating system, which transfers electrons from NADH to rubredoxin reductase and then through rubredoxin to alkane 1 monooxygenase. This chain is Rubredoxin-NAD(+) reductase (rubB), found in Alcanivorax borkumensis (strain ATCC 700651 / DSM 11573 / NCIMB 13689 / SK2).